We begin with the raw amino-acid sequence, 662 residues long: UvrABC system protein B (662 aa).

In terms of domain architecture, Helicase ATP-binding spans 25-414 (TGLNSKKRSQ…GTVVELIIRP (390 aa)). Position 38 to 45 (38 to 45 (GITGSGKT)) interacts with ATP. Residues 91-114 (YYDYYQPESYIVRTDTFIEKDSSI) carry the Beta-hairpin motif. The region spanning 430–592 (QVEDLISEIQ…IIPKTINRAI (163 aa)) is the Helicase C-terminal domain. In terms of domain architecture, UVR spans 622-657 (KAHMDKLKKEMFKAASNLEFEQAAKLRNQLKALEEA).

This sequence belongs to the UvrB family. As to quaternary structure, forms a heterotetramer with UvrA during the search for lesions. Interacts with UvrC in an incision complex.

The protein localises to the cytoplasm. In terms of biological role, the UvrABC repair system catalyzes the recognition and processing of DNA lesions. A damage recognition complex composed of 2 UvrA and 2 UvrB subunits scans DNA for abnormalities. Upon binding of the UvrA(2)B(2) complex to a putative damaged site, the DNA wraps around one UvrB monomer. DNA wrap is dependent on ATP binding by UvrB and probably causes local melting of the DNA helix, facilitating insertion of UvrB beta-hairpin between the DNA strands. Then UvrB probes one DNA strand for the presence of a lesion. If a lesion is found the UvrA subunits dissociate and the UvrB-DNA preincision complex is formed. This complex is subsequently bound by UvrC and the second UvrB is released. If no lesion is found, the DNA wraps around the other UvrB subunit that will check the other stand for damage. The sequence is that of UvrABC system protein B from Rickettsia prowazekii (strain Madrid E).